A 456-amino-acid chain; its full sequence is MTTSHQPQDRYKAVWLIFFMLGLGTLLPWNFFMTATQYFTNRLDMSQNVSLVTAELSKDAQASAAPAAPLPERNSLSAIFNNVMTLCAMLPLLLFTYLNSFLHQRIPQSVRILGSLVAILLVFLITAILVKVQLDALPFFVITMIKIVLINSFGAILQGSLFGLAGLLPASYTAPIMSGQGLAGFFASVAMICAIASGSELSESAFGYFITACAVIILTIICYLGLPRLEFYRYYQQLKLEGPGEQETKLDLISKGEEPRAGKEESGVSVSNSQPTNESHSIKAILKNISVLAFSVCFIFTITIGMFPAVTVEVKSSIAGSSTWERYFIPVSCFLTFNIFDWLGRSLTAVFMWPGKDSRWLPSLVLARLVFVPLLLLCNIKPRRYLTVVFEHDAWFIFFMAAFAFSNGYLASLCMCFGPKKVKPAEAETAGAIMAFFLCLGLALGAVFSFLFRAIV.

Topologically, residues 2 to 12 are cytoplasmic; the sequence is TTSHQPQDRYK. The chain crosses the membrane as a helical span at residues 13 to 29; the sequence is AVWLIFFMLGLGTLLPW. Residues 30-82 are Extracellular-facing; that stretch reads NFFMTATQYFTNRLDMSQNVSLVTAELSKDAQASAAPAAPLPERNSLSAIFNN. Asn-48 carries N-linked (GlcNAc...) asparagine glycosylation. Residues 83 to 107 form a helical membrane-spanning segment; sequence VMTLCAMLPLLLFTYLNSFLHQRIP. Residues 108 to 111 are Cytoplasmic-facing; that stretch reads QSVR. A helical membrane pass occupies residues 112 to 130; the sequence is ILGSLVAILLVFLITAILV. Over 131 to 138 the chain is Extracellular; that stretch reads KVQLDALP. The chain crosses the membrane as a helical span at residues 139–157; it reads FFVITMIKIVLINSFGAIL. The Cytoplasmic segment spans residues 158 to 174; the sequence is QGSLFGLAGLLPASYTA. Residues 175–199 traverse the membrane as a helical segment; the sequence is PIMSGQGLAGFFASVAMICAIASGS. The Extracellular portion of the chain corresponds to 200-206; that stretch reads ELSESAF. A helical transmembrane segment spans residues 207-227; sequence GYFITACAVIILTIICYLGLP. Residues 228–291 are Cytoplasmic-facing; the sequence is RLEFYRYYQQ…IKAILKNISV (64 aa). 3 positions are modified to phosphoserine: Ser-254, Ser-269, and Ser-273. The segment covering 254–266 has biased composition (basic and acidic residues); that stretch reads SKGEEPRAGKEES. Residues 254-276 are disordered; the sequence is SKGEEPRAGKEESGVSVSNSQPT. The chain crosses the membrane as a helical span at residues 292-311; it reads LAFSVCFIFTITIGMFPAVT. Over 312–323 the chain is Extracellular; sequence VEVKSSIAGSST. A helical transmembrane segment spans residues 324–342; sequence WERYFIPVSCFLTFNIFDW. Residues 343–359 are Cytoplasmic-facing; the sequence is LGRSLTAVFMWPGKDSR. Residues 360 to 378 form a helical membrane-spanning segment; sequence WLPSLVLARLVFVPLLLLC. The Extracellular segment spans residues 379–393; the sequence is NIKPRRYLTVVFEHD. A helical membrane pass occupies residues 394–413; sequence AWFIFFMAAFAFSNGYLASL. At 414–431 the chain is on the cytoplasmic side; sequence CMCFGPKKVKPAEAETAG. The helical transmembrane segment at 432–452 threads the bilayer; that stretch reads AIMAFFLCLGLALGAVFSFLF. The Extracellular portion of the chain corresponds to 453 to 456; sequence RAIV.

This sequence belongs to the SLC29A/ENT transporter (TC 2.A.57) family. Identified in a complex with STOM. Post-translationally, glycosylated. Expressed in testis at the blood-testis barrier (at protein level). Detected in erythrocytes (at protein level). Expressed at relatively high levels in cerebral cortex, particularly the frontal and parietal lobes, and the thalamus and basal ganglia (at protein level). In the midbrain expressed at moderate levels, whereas in the other areas of the brainstem, namely medulla and pons, cerebellum and the hippocampus expressed at lower amounts when compared to the other brain regions (at protein level). Expressed in Langerhans cells and lymphocytes in the pancreas (at protein level). Expressed in kidney, in polarized renal epithelial cells. Expressed in adipose tissues. Expressed in placenta. Expressed in small intestine.

The protein localises to the basolateral cell membrane. Its subcellular location is the apical cell membrane. It localises to the cell membrane. The catalysed reaction is adenosine(in) = adenosine(out). It catalyses the reaction guanosine(in) = guanosine(out). The enzyme catalyses inosine(in) = inosine(out). It carries out the reaction uridine(out) = uridine(in). The catalysed reaction is thymidine(in) = thymidine(out). It catalyses the reaction cytidine(in) = cytidine(out). The enzyme catalyses adenine(out) = adenine(in). It carries out the reaction guanine(out) = guanine(in). The catalysed reaction is thymine(out) = thymine(in). It catalyses the reaction uracil(in) = uracil(out). The enzyme catalyses hypoxanthine(out) = hypoxanthine(in). Its activity is regulated as follows. Transporter activity is sensitive to low concentrations of the inhibitor nitrobenzylmercaptopurine riboside (NBMPR). Inhibited by dilazep. Inhibited by dipyridamole. Inhibited by hypoxanthine. Inhibited by azidothymidine (AZT). Inhibited by dideoxycytidine (ddC). Inhibited by dideoxyinosine (ddI). Inhibited by draflazine. Inhibited by soluflazine. Inhibited by cladribine. Inhibited by capecitabine. Inhibited by clofarabine. Inhibited by ribavirin. Modestly inhibited by acyclovir. Modestly inhibited by 5-fluorouracil. Its function is as follows. Uniporter involved in the facilitative transport of nucleosides and nucleobases, and contributes to maintaining their cellular homeostasis. Functions as a Na(+)-independent transporter. Involved in the transport of nucleosides such as adenosine, guanosine, inosine, uridine, thymidine and cytidine. Also transports purine nucleobases (hypoxanthine, adenine, guanine) and pyrimidine nucleobases (thymine, uracil). Mediates basolateral nucleoside uptake into Sertoli cells, thereby regulating the transport of nucleosides in testis across the blood-testis barrier. Regulates inosine levels in brown adipocytes tissues (BAT) and extracellular inosine levels, which controls BAT-dependent energy expenditure. The sequence is that of Equilibrative nucleoside transporter 1 from Homo sapiens (Human).